A 59-amino-acid chain; its full sequence is Kunitz-type serine protease inhibitor dendrotoxin E (59 aa).

Positions 7-57 (CKLPAEPGPCKASIPAFYYNWAAKKCQLFHYGGCKGNANRFSTIEKCRHAC) constitute a BPTI/Kunitz inhibitor domain. 3 disulfide bridges follow: Cys-7-Cys-57, Cys-16-Cys-40, and Cys-32-Cys-53.

It belongs to the venom Kunitz-type family. Expressed by the venom gland.

The protein localises to the secreted. In terms of biological role, serine protease inhibitor that inhibits trypsin. May also inhibit voltage-gated potassium channels (Kv). Binds transition metal ions such as copper and cobalt. This is Kunitz-type serine protease inhibitor dendrotoxin E from Dendroaspis polylepis polylepis (Black mamba).